The chain runs to 65 residues: Large ribosomal subunit protein bL35 (65 aa).

The segment at 1–28 is disordered; sequence MPKMKTNRSAAKRFGKTGSGKFTRRRQN.

It belongs to the bacterial ribosomal protein bL35 family.

This is Large ribosomal subunit protein bL35 from Solidesulfovibrio magneticus (strain ATCC 700980 / DSM 13731 / RS-1) (Desulfovibrio magneticus).